A 76-amino-acid chain; its full sequence is Exodeoxyribonuclease 7 small subunit (76 aa).

It belongs to the XseB family. Heterooligomer composed of large and small subunits.

It is found in the cytoplasm. It carries out the reaction Exonucleolytic cleavage in either 5'- to 3'- or 3'- to 5'-direction to yield nucleoside 5'-phosphates.. Bidirectionally degrades single-stranded DNA into large acid-insoluble oligonucleotides, which are then degraded further into small acid-soluble oligonucleotides. This chain is Exodeoxyribonuclease 7 small subunit, found in Legionella pneumophila subsp. pneumophila (strain Philadelphia 1 / ATCC 33152 / DSM 7513).